Reading from the N-terminus, the 943-residue chain is WD repeat-containing protein 3 (943 aa).

5 WD repeats span residues 21–60 (SQKG…KILI), 63–102 (GLKQ…GNVT), 105–144 (GHKA…GLYR), 147–186 (GHKD…CFKT), and 189–228 (GHRT…EIED). A phosphoserine mark is found at serine 240 and serine 241. A Phosphothreonine modification is found at threonine 257. The stretch at 277–316 (EGRDRVVNLAVDKTGRILACHGTDSVLELFCILSKKEIQK) is one WD 6 repeat. The disordered stretch occupies residues 326–345 (RKKAKLHSSKGEEEDPEVNV). 7 WD repeats span residues 413-451 (GHRS…CIRT), 453-493 (TCEY…ETID), 494-533 (AHDG…DENS), 547-586 (QLDE…FFLS), 589-630 (GHKL…KSLF), 631-670 (AHDD…HIQT), and 673-712 (GHHQ…LILE). Glycyl lysine isopeptide (Lys-Gly) (interchain with G-Cter in SUMO2) cross-links involve residues lysine 474 and lysine 529. Serine 726 bears the Phosphoserine mark.

The protein belongs to the WD repeat WDR3/UTP12 family. As to quaternary structure, part of the small subunit (SSU) processome, composed of more than 70 proteins and the RNA chaperone small nucleolar RNA (snoRNA) U3. Ubiquitous.

The protein localises to the nucleus. It localises to the nucleolus. Functionally, part of the small subunit (SSU) processome, first precursor of the small eukaryotic ribosomal subunit. During the assembly of the SSU processome in the nucleolus, many ribosome biogenesis factors, an RNA chaperone and ribosomal proteins associate with the nascent pre-rRNA and work in concert to generate RNA folding, modifications, rearrangements and cleavage as well as targeted degradation of pre-ribosomal RNA by the RNA exosome. This Homo sapiens (Human) protein is WD repeat-containing protein 3.